A 199-amino-acid chain; its full sequence is NAD(P)H quinone oxidoreductase PST3 (199 aa).

A Flavodoxin-like domain is found at 5 to 193 (VAIIIYSLYH…EIAFIQGKSF (189 aa)). Residues 11–15 (SLYHH) and 111–165 (IFVS…SPYG) each bind FMN.

The protein belongs to the WrbA family. FMN serves as cofactor.

The protein resides in the cell membrane. The enzyme catalyses a quinone + NADH + H(+) = a quinol + NAD(+). The catalysed reaction is a quinone + NADPH + H(+) = a quinol + NADP(+). Its function is as follows. Flavodoxin-like protein (FLP) that plays a role in cell wall integrity, oxidative stress protection and virulence. FLPs act as NAD(P)H quinone oxidoreductases. Reduces ubiquinone (coenzyme Q), enabling it to serve as an antioxidant in the membrane. This chain is NAD(P)H quinone oxidoreductase PST3, found in Candida albicans (strain SC5314 / ATCC MYA-2876) (Yeast).